The chain runs to 428 residues: Adenylosuccinate synthetase (428 aa).

GTP is bound by residues 12–18 and 40–42; these read GDEGKGK and GHT. Aspartate 13 serves as the catalytic Proton acceptor. Mg(2+)-binding residues include aspartate 13 and glycine 40. Residues 13-16, 38-41, threonine 133, arginine 147, asparagine 224, threonine 239, and arginine 303 each bind IMP; these read DEGK and NAGH. The Proton donor role is filled by histidine 41. Residue 299–305 coordinates substrate; sequence TTTGRRR. GTP is bound by residues arginine 305, 331 to 333, and 413 to 415; these read KLD and GVG.

The protein belongs to the adenylosuccinate synthetase family. As to quaternary structure, homodimer. It depends on Mg(2+) as a cofactor.

It localises to the cytoplasm. It carries out the reaction IMP + L-aspartate + GTP = N(6)-(1,2-dicarboxyethyl)-AMP + GDP + phosphate + 2 H(+). Its pathway is purine metabolism; AMP biosynthesis via de novo pathway; AMP from IMP: step 1/2. Plays an important role in the de novo pathway and in the salvage pathway of purine nucleotide biosynthesis. Catalyzes the first committed step in the biosynthesis of AMP from IMP. The chain is Adenylosuccinate synthetase from Coprinopsis cinerea (strain Okayama-7 / 130 / ATCC MYA-4618 / FGSC 9003) (Inky cap fungus).